Consider the following 1433-residue polypeptide: Regulatory protein CAT8 (1433 aa).

Positions glycine 20–alanine 38 are enriched in polar residues. The interval glycine 20–proline 40 is disordered. Positions cysteine 70–cysteine 97 form a DNA-binding region, zn(2)-C6 fungal-type. The segment covering lysine 936 to serine 946 has biased composition (polar residues). Disordered regions lie at residues lysine 936 to lysine 1024, glutamine 1137 to serine 1162, serine 1200 to serine 1236, and leucine 1324 to lysine 1433. Basic and acidic residues-rich tracts occupy residues leucine 947–tyrosine 965 and leucine 994–lysine 1005. 3 stretches are compositionally biased toward polar residues: residues asparagine 1138–serine 1162, proline 1221–glycine 1235, and proline 1326–arginine 1348. Residues serine 1349 to serine 1362 show a composition bias toward low complexity. 2 stretches are compositionally biased toward polar residues: residues glutamine 1363–serine 1391 and serine 1418–lysine 1433.

In terms of processing, could be the target of the SNF1/CAT1 - SNF4/CAT3 kinase complex.

It localises to the nucleus. In terms of biological role, activator of the gluconeogenic enzymes FBP1 and PCK1 genes. The polypeptide is Regulatory protein CAT8 (CAT8) (Saccharomyces cerevisiae (strain ATCC 204508 / S288c) (Baker's yeast)).